We begin with the raw amino-acid sequence, 216 residues long: N-(5'-phosphoribosyl)anthranilate isomerase (216 aa).

This sequence belongs to the TrpF family.

The catalysed reaction is N-(5-phospho-beta-D-ribosyl)anthranilate = 1-(2-carboxyphenylamino)-1-deoxy-D-ribulose 5-phosphate. It functions in the pathway amino-acid biosynthesis; L-tryptophan biosynthesis; L-tryptophan from chorismate: step 3/5. The sequence is that of N-(5'-phosphoribosyl)anthranilate isomerase from Methanopyrus kandleri (strain AV19 / DSM 6324 / JCM 9639 / NBRC 100938).